The following is a 155-amino-acid chain: Troponin C, isoform 2 (155 aa).

4 EF-hand domains span residues Glu11–Pro46, Phe47–Glu82, Ala87–Gln122, and Leu123–Glu155. Residues Asp60, Asp62, Ser64, Arg66, and Glu71 each coordinate Ca(2+). 5 residues coordinate Ca(2+): Asp136, Asp138, Ser140, Thr142, and Glu147.

The protein belongs to the troponin C family. As to expression, accumulates almost exclusively in larval muscles.

The protein is Troponin C, isoform 2 (TpnC47D) of Drosophila melanogaster (Fruit fly).